We begin with the raw amino-acid sequence, 816 residues long: Leucine--tRNA ligase (816 aa).

Positions 40–51 (SYPSGSQLHAGH) match the 'HIGH' region motif. Positions 576-580 (KMSKS) match the 'KMSKS' region motif. Residue lysine 579 coordinates ATP.

This sequence belongs to the class-I aminoacyl-tRNA synthetase family.

It is found in the cytoplasm. The enzyme catalyses tRNA(Leu) + L-leucine + ATP = L-leucyl-tRNA(Leu) + AMP + diphosphate. The protein is Leucine--tRNA ligase of Clostridium perfringens (strain ATCC 13124 / DSM 756 / JCM 1290 / NCIMB 6125 / NCTC 8237 / Type A).